Consider the following 387-residue polypeptide: 4-hydroxy-3-methylbut-2-en-1-yl diphosphate synthase (flavodoxin) (387 aa).

[4Fe-4S] cluster is bound by residues C272, C275, C307, and E314.

It belongs to the IspG family. [4Fe-4S] cluster is required as a cofactor.

It catalyses the reaction (2E)-4-hydroxy-3-methylbut-2-enyl diphosphate + oxidized [flavodoxin] + H2O + 2 H(+) = 2-C-methyl-D-erythritol 2,4-cyclic diphosphate + reduced [flavodoxin]. Its pathway is isoprenoid biosynthesis; isopentenyl diphosphate biosynthesis via DXP pathway; isopentenyl diphosphate from 1-deoxy-D-xylulose 5-phosphate: step 5/6. In terms of biological role, converts 2C-methyl-D-erythritol 2,4-cyclodiphosphate (ME-2,4cPP) into 1-hydroxy-2-methyl-2-(E)-butenyl 4-diphosphate. The protein is 4-hydroxy-3-methylbut-2-en-1-yl diphosphate synthase (flavodoxin) of Granulibacter bethesdensis (strain ATCC BAA-1260 / CGDNIH1).